Here is a 234-residue protein sequence, read N- to C-terminus: Small ribosomal subunit protein eS4 (234 aa).

In terms of domain architecture, S4 RNA-binding spans 39–102 (MPLVVVLRDL…NANYRVVIGM (64 aa)).

Belongs to the eukaryotic ribosomal protein eS4 family.

This chain is Small ribosomal subunit protein eS4, found in Methanocella arvoryzae (strain DSM 22066 / NBRC 105507 / MRE50).